The sequence spans 871 residues: Transient receptor potential cation channel subfamily V member 4 (871 aa).

Residues 1 to 68 (MADSSEGPRA…GPGDGRPNLR (68 aa)) form a disordered region. The Cytoplasmic segment spans residues 1-469 (MADSSEGPRA…RDKWRKFGAV (469 aa)). Phosphotyrosine is present on Tyr110. ATP is bound by residues Lys192, Lys197, Asn201, 236–239 (YRGQ), and Arg248. ANK repeat units follow at residues 237–266 (RGQTALHIAIERRCKHYVELLVAQGADVHA) and 284–313 (FGELPLSLAACTNQPHIVNYLTENPHKKAD). 249–251 (RCK) contacts a 1,2-diacyl-sn-glycero-3-phospho-(1D-myo-inositol-4,5-bisphosphate). Tyr253 carries the post-translational modification Phosphotyrosine. A 1,2-diacyl-sn-glycero-3-phospho-(1D-myo-inositol-4,5-bisphosphate) contacts are provided by residues 296–299 (NQPH) and Lys344. An ANK 3 repeat occupies 369–398 (DGLSPLMMAAKTGKIGIFQHIIRREVTDED). The chain crosses the membrane as a helical span at residues 470–490 (SFYINVVSYLCAMVIFTLTAY). At 491 to 507 (YQPLEGTPPYPYRTTVD) the chain is on the extracellular side. The helical transmembrane segment at 508–534 (YLRLAGEVITLFTGVLFFFTNIKDLFM) threads the bilayer. Residues 535–547 (KKCPGVNSLFIDG) lie on the Cytoplasmic side of the membrane. A helical transmembrane segment spans residues 548–568 (SFQLLYFIYSVLVIVSAALYL). At 569–572 (AGIE) the chain is on the extracellular side. The helical transmembrane segment at 573-593 (AYLAVMVFALVLGWMNALYFT) threads the bilayer. The Cytoplasmic portion of the chain corresponds to 594-608 (RGLKLTGTYSIMIQK). A helical transmembrane segment spans residues 609–636 (ILFKDLFRFLLVYLLFMIGYASALVSLL). At 637-665 (NPCANMKVCNEDQTNCTVPTYPSCRDSET) the chain is on the extracellular side. Positions 666 to 685 (FSTFLLDLFKLTIGMGDLEM) form an intramembrane region, pore-forming. The Selectivity filter signature appears at 679-682 (GMGD). A Ca(2+)-binding site is contributed by Asp682. The Extracellular portion of the chain corresponds to 686 to 693 (LSSTKYPV). A helical membrane pass occupies residues 694 to 722 (VFIILLVTYIILTFVLLLNMLIALMGETV). The Cytoplasmic portion of the chain corresponds to 723 to 871 (GQVSKESKHI…RKWRTDDAPL (149 aa)). A Phosphotyrosine modification is found at Tyr805. An interaction with calmodulin and ITPR3 region spans residues 812 to 831 (HTVGRLRRDRWSSVVPRVVE). A Phosphoserine modification is found at Ser824. The tract at residues 849–871 (GNPRCDGHQQGYPRKWRTDDAPL) is disordered.

This sequence belongs to the transient receptor (TC 1.A.4) family. TrpV subfamily. TRPV4 sub-subfamily. Homotetramer. Self-associates in an isoform-specific manner. Isoform 1 and isoform 5 can oligomerize, but isoform 2, isoform 4 and isoform 6 cannot oligomerize. Interacts with calmodulin. Interacts with Map7 and Src family Tyr protein kinases LYN, SRC, FYN, HCK, LCK and YES. Interacts with CTNNB1. The TRPV4 and CTNNB1 complex can interact with CDH1. Interacts with PACSIN1, PACSIN2 and PACSIN3 (via SH3 domain). Part of a complex containing MLC1, AQP4, HEPACAM and ATP1B1. Interacts with ITPR3. Interacts with AQP5; the interaction is probably indirect and regulates TRPV4 activation by hypotonicity. Interacts with ANO1. Interacts (via C-terminus) with PKD2 (via C-terminus). Interacts with DDX3X; this interaction is decreased when the channel is activated. N-glycosylated. In terms of tissue distribution, found in the synoviocytes from patients with (RA) and without (CTR) rheumatoid arthritis (at protein level).

Its subcellular location is the cell membrane. It is found in the apical cell membrane. It localises to the cell junction. The protein localises to the adherens junction. The protein resides in the cell projection. Its subcellular location is the cilium. It is found in the endoplasmic reticulum. The catalysed reaction is Ca(2+)(in) = Ca(2+)(out). With respect to regulation, channel activation is inhibited by binding to phosphatidylinositol-4,5-bisphosphate, and to a much lesser degree by phosphatidylinositol-3,4,5-trisphosphate. Not inhibited by phosphatidylinositol-3,4-bisphosphate and phosphatidylinositol-3,5-bisphosphate. Non-selective calcium permeant cation channel involved in osmotic sensitivity and mechanosensitivity. Activation by exposure to hypotonicity within the physiological range exhibits an outward rectification. Also activated by heat, low pH, citrate and phorbol esters. Increase of intracellular Ca(2+) potentiates currents. Channel activity seems to be regulated by a calmodulin-dependent mechanism with a negative feedback mechanism. Promotes cell-cell junction formation in skin keratinocytes and plays an important role in the formation and/or maintenance of functional intercellular barriers. Acts as a regulator of intracellular Ca(2+) in synoviocytes. Plays an obligatory role as a molecular component in the nonselective cation channel activation induced by 4-alpha-phorbol 12,13-didecanoate and hypotonic stimulation in synoviocytes and also regulates production of IL-8. Together with PKD2, forms mechano- and thermosensitive channels in cilium. Negatively regulates expression of PPARGC1A, UCP1, oxidative metabolism and respiration in adipocytes. Regulates expression of chemokines and cytokines related to pro-inflammatory pathway in adipocytes. Together with AQP5, controls regulatory volume decrease in salivary epithelial cells. Required for normal development and maintenance of bone and cartilage. In its inactive state, may sequester DDX3X at the plasma membrane. When activated, the interaction between both proteins is affected and DDX3X relocalizes to the nucleus. In neurons of the central nervous system, could play a role in triggering voluntary water intake in response to increased sodium concentration in body fluid. Functionally, non-selective calcium permeant cation channel involved in osmotic sensitivity and mechanosensitivity. Activation by exposure to hypotonicity within the physiological range exhibits an outward rectification. Also activated by phorbol esters. Has the same channel activity as isoform 1, and is activated by the same stimuli. In terms of biological role, lacks channel activity, due to impaired oligomerization and intracellular retention. Its function is as follows. (Microbial infection) Facilitates hepatitis C virus (HCV) replication, possibly through its action on DDX3X. (Microbial infection) Facilitates Dengue virus (DENV) replication, possibly through its action on DDX3X. Functionally, (Microbial infection) Facilitates Zika virus (ZIKV) replication, possibly through its action on DDX3X. The chain is Transient receptor potential cation channel subfamily V member 4 (TRPV4) from Homo sapiens (Human).